A 390-amino-acid polypeptide reads, in one-letter code: S-adenosylmethionine synthase 1 (390 aa).

Glu9 contacts Mg(2+). ATP is bound at residue His15. Glu43 is a binding site for K(+). L-methionine contacts are provided by Glu56 and Gln99. ATP is bound by residues Asp167–Lys169, Ser235–Phe238, Asp246, Arg252–Lys253, Ala269, Lys273, and Lys277. Residue Asp246 participates in L-methionine binding. Lys277 lines the L-methionine pocket.

Belongs to the AdoMet synthase family. Homotetramer. Requires Mn(2+) as cofactor. Mg(2+) is required as a cofactor. It depends on Co(2+) as a cofactor. K(+) serves as cofactor.

The protein resides in the cytoplasm. It catalyses the reaction L-methionine + ATP + H2O = S-adenosyl-L-methionine + phosphate + diphosphate. It participates in amino-acid biosynthesis; S-adenosyl-L-methionine biosynthesis; S-adenosyl-L-methionine from L-methionine: step 1/1. Functionally, catalyzes the formation of S-adenosylmethionine from methionine and ATP. The reaction comprises two steps that are both catalyzed by the same enzyme: formation of S-adenosylmethionine (AdoMet) and triphosphate, and subsequent hydrolysis of the triphosphate. This chain is S-adenosylmethionine synthase 1 (SAM1), found in Actinidia chinensis var. chinensis (Chinese soft-hair kiwi).